The sequence spans 854 residues: DNA mismatch repair protein MutS (854 aa).

An ATP-binding site is contributed by 615 to 622 (GPNMGGKS).

This sequence belongs to the DNA mismatch repair MutS family.

Its function is as follows. This protein is involved in the repair of mismatches in DNA. It is possible that it carries out the mismatch recognition step. This protein has a weak ATPase activity. The protein is DNA mismatch repair protein MutS of Aliivibrio fischeri (strain ATCC 700601 / ES114) (Vibrio fischeri).